The chain runs to 252 residues: Ribosomal RNA small subunit methyltransferase J (252 aa).

S-adenosyl-L-methionine contacts are provided by residues 101–102 (RD), 117–118 (ER), 153–154 (SS), and Asp171.

The protein belongs to the methyltransferase superfamily. RsmJ family.

It localises to the cytoplasm. The enzyme catalyses guanosine(1516) in 16S rRNA + S-adenosyl-L-methionine = N(2)-methylguanosine(1516) in 16S rRNA + S-adenosyl-L-homocysteine + H(+). Specifically methylates the guanosine in position 1516 of 16S rRNA. The protein is Ribosomal RNA small subunit methyltransferase J of Salmonella typhi.